The sequence spans 243 residues: Myrosinase MB2 (243 aa).

A glycan (N-linked (GlcNAc...) asparagine) is linked at N30. Y51 is a substrate binding site. E125 functions as the Nucleophile in the catalytic mechanism. Residues W173 and 180–181 (EF) each bind substrate. N-linked (GlcNAc...) asparagine glycosylation occurs at N216.

The protein belongs to the glycosyl hydrolase 1 family. As to quaternary structure, homodimer. As to expression, in vacuoles called myrosin grains of a certain class of cells, myrosin cells, distributed in the cotyledons and the axis of the embryo as well as in different organs of the growing plant.

The protein localises to the vacuole. It catalyses the reaction a thioglucoside + H2O = a sugar + a thiol.. Degradation of glucosinolates (glucose residue linked by a thioglucoside bound to an amino acid derivative) to glucose, sulfate and any of the products: thiocyanates, isothiocyanates, nitriles, epithionitriles or oxazolidine-2-thiones. The polypeptide is Myrosinase MB2 (Sinapis alba (White mustard)).